The primary structure comprises 208 residues: FMRFamide-like neuropeptide 18 (208 aa).

A signal peptide spans 1–21 (MQRWSGVLLISLCCLLRGALA). Positions 22 to 83 (YTEPIYEIVE…VWEKRESSVQ (62 aa)) are excised as a propeptide. F93 carries the phenylalanine amide modification. Residues 97 to 101 (AYFDE) constitute a propeptide that is removed on maturation. Residue F111 is modified to Phenylalanine amide. A propeptide spanning residues 115–119 (SYFDE) is cleaved from the precursor. F129 bears the Phenylalanine amide mark. A propeptide spanning residues 133–137 (DVPMD) is cleaved from the precursor. A Phenylalanine amide modification is found at F147. Residues 151 to 158 (DYMADSFD) constitute a propeptide that is removed on maturation. Phenylalanine amide is present on residues F169 and F180. Positions 184–195 (SDLEEHYAGVLL) are excised as a propeptide. F205 carries the phenylalanine amide modification.

Belongs to the FARP (FMRFamide related peptide) family. Post-translationally, may be processed by convertase egl-3. Expressed in head neurons and weakly in ventral nerve cord. Expressed in the interneurons AVA, AIY and RIG, the motor neuron RIM and the pharyngeal neurons M2 and M3. EMPGVLRF-amide: Expressed in cholinergic pharyngeal motoneurons M2 and M3.

The protein localises to the secreted. FMRFamide-like neuropeptides. Ligand to G-protein coupled receptor npr-1. Involved in modulating locomotion quiescence during the sleep-like state called lethargus which occurs during molting between larval and adult stages, acting via npr-1. Together with flp-1, plays a homeostatic role by acting on the GABAergic neural transmission at neuromuscular junctions to prevent overexcitation of the locomotor circuit. Plays a role in the navigational capacity of sperm and the targeting of sperm derived from males to the fertilization site in the uterus of hermaphrodites. In terms of biological role, SVPGVLRF-amide: Excites muscle tension. Its function is as follows. Activates the G-protein coupled receptor npr-1 more effectively than other flp-18 peptides. Inhibits the activity of dissected pharyngeal myogenic muscle system. This Caenorhabditis elegans protein is FMRFamide-like neuropeptide 18.